A 1058-amino-acid polypeptide reads, in one-letter code: Ubiquitin-like modifier-activating enzyme 1 (1058 aa).

The segment at 1–46 (MSSSPLSKKRRVSGPDPKPGSNCSPAQSALSEVSSVPTNGMAKNGS) is disordered. An N-acetylserine modification is found at serine 2. Phosphoserine is present on residues serine 4, serine 13, serine 21, serine 24, and serine 46. The segment covering 21 to 38 (SNCSPAQSALSEVSSVPT) has biased composition (polar residues). A Phosphotyrosine modification is found at tyrosine 55. 2 consecutive repeat copies span residues 63–199 (GHEA…GQLF) and 459–611 (GSDF…QVVI). Residues 63-611 (GHEAMKMLQT…GTKGNVQVVI (549 aa)) are 2 approximate repeats. Residues alanine 478, aspartate 504, arginine 515, lysine 528, and 576-577 (DN) contribute to the ATP site. Residue lysine 528 is modified to N6-succinyllysine. Cysteine 632 serves as the catalytic Glycyl thioester intermediate. Residue lysine 671 is modified to N6-acetyllysine. At threonine 800 the chain carries Phosphothreonine. 4 positions are modified to phosphoserine: serine 810, serine 816, serine 820, and serine 835. Residue lysine 980 is modified to N6-acetyllysine.

Belongs to the ubiquitin-activating E1 family. Monomer. Interacts with GAN (via BTB domain). In terms of processing, ISGylated. In terms of tissue distribution, ubiquitously expressed. In testis, expressed in A spermatogonia and spermatids but at very low levels in pachytene spermatocytes.

The protein localises to the cytoplasm. It localises to the mitochondrion. The protein resides in the nucleus. It carries out the reaction ATP + ubiquitin + [E1 ubiquitin-activating enzyme]-L-cysteine = AMP + diphosphate + S-ubiquitinyl-[E1 ubiquitin-activating enzyme]-L-cysteine.. It participates in protein modification; protein ubiquitination. Catalyzes the first step in ubiquitin conjugation to mark cellular proteins for degradation through the ubiquitin-proteasome system. Activates ubiquitin by first adenylating its C-terminal glycine residue with ATP, and thereafter linking this residue to the side chain of a cysteine residue in E1, yielding a ubiquitin-E1 thioester and free AMP. Essential for the formation of radiation-induced foci, timely DNA repair and for response to replication stress. Promotes the recruitment of TP53BP1 and BRCA1 at DNA damage sites. In Mus musculus (Mouse), this protein is Ubiquitin-like modifier-activating enzyme 1 (Uba1).